The following is a 400-amino-acid chain: EARP-interacting protein homolog (400 aa).

Positions Asn-95–Asn-114 are disordered. Residues Asn-96–Asn-114 are compositionally biased toward low complexity. 3 WD repeats span residues Gly-138 to Thr-178, Ala-227 to Lys-267, and Gly-271 to Asn-311. Low complexity predominate over residues Asn-314 to Pro-333. Residues Asn-314 to Asn-348 are disordered. The stretch at Glu-358–Leu-397 is one WD 4 repeat.

This sequence belongs to the WD repeat EIPR1 family.

In Dictyostelium discoideum (Social amoeba), this protein is EARP-interacting protein homolog.